A 940-amino-acid polypeptide reads, in one-letter code: Isoleucine--tRNA ligase (940 aa).

Positions 58 to 68 match the 'HIGH' region motif; that stretch reads PYANGSIHIGH. Glu-564 contacts L-isoleucyl-5'-AMP. The short motif at 605 to 609 is the 'KMSKS' region element; that stretch reads KMSKS. Residue Lys-608 participates in ATP binding. Zn(2+)-binding residues include Cys-903, Cys-906, Cys-923, and Cys-926.

This sequence belongs to the class-I aminoacyl-tRNA synthetase family. IleS type 1 subfamily. As to quaternary structure, monomer. The cofactor is Zn(2+).

The protein resides in the cytoplasm. The catalysed reaction is tRNA(Ile) + L-isoleucine + ATP = L-isoleucyl-tRNA(Ile) + AMP + diphosphate. Catalyzes the attachment of isoleucine to tRNA(Ile). As IleRS can inadvertently accommodate and process structurally similar amino acids such as valine, to avoid such errors it has two additional distinct tRNA(Ile)-dependent editing activities. One activity is designated as 'pretransfer' editing and involves the hydrolysis of activated Val-AMP. The other activity is designated 'posttransfer' editing and involves deacylation of mischarged Val-tRNA(Ile). This is Isoleucine--tRNA ligase from Shewanella baltica (strain OS195).